The following is a 295-amino-acid chain: Ribosomal protein L11 methyltransferase (295 aa).

Residues T150, G171, D193, and N232 each coordinate S-adenosyl-L-methionine.

Belongs to the methyltransferase superfamily. PrmA family.

It localises to the cytoplasm. The enzyme catalyses L-lysyl-[protein] + 3 S-adenosyl-L-methionine = N(6),N(6),N(6)-trimethyl-L-lysyl-[protein] + 3 S-adenosyl-L-homocysteine + 3 H(+). Methylates ribosomal protein L11. The sequence is that of Ribosomal protein L11 methyltransferase from Neisseria gonorrhoeae (strain ATCC 700825 / FA 1090).